The following is an 88-amino-acid chain: EGTPSLGKRHNKSHTLCNRCGRRSFHVQKKTCSSCGYPAAKMRSHNWALKAKRRRTTGTGRMAYLKHVTRRFKNGFQTGVAKAQTPSA.

Zn(2+) contacts are provided by C17, C20, C32, and C35. The C4-type zinc finger occupies 17-35 (CNRCGRRSFHVQKKTCSSC).

Belongs to the eukaryotic ribosomal protein eL37 family. It depends on Zn(2+) as a cofactor.

Functionally, binds to the 23S rRNA. The protein is Large ribosomal subunit protein eL37 (RPL37) of Candida albicans (Yeast).